Here is a 61-residue protein sequence, read N- to C-terminus: Small ribosomal subunit protein uS14 (61 aa).

Residues Cys24, Cys27, Cys40, and Cys43 each contribute to the Zn(2+) site.

This sequence belongs to the universal ribosomal protein uS14 family. Zinc-binding uS14 subfamily. In terms of assembly, part of the 30S ribosomal subunit. Contacts proteins S3 and S10. Requires Zn(2+) as cofactor.

Functionally, binds 16S rRNA, required for the assembly of 30S particles and may also be responsible for determining the conformation of the 16S rRNA at the A site. In Mycoplasmopsis agalactiae (strain NCTC 10123 / CIP 59.7 / PG2) (Mycoplasma agalactiae), this protein is Small ribosomal subunit protein uS14.